Reading from the N-terminus, the 180-residue chain is GTP cyclohydrolase 1 (180 aa).

Residues Cys71, His74, and Cys142 each contribute to the Zn(2+) site.

It belongs to the GTP cyclohydrolase I family. As to quaternary structure, homomer.

It carries out the reaction GTP + H2O = 7,8-dihydroneopterin 3'-triphosphate + formate + H(+). The protein operates within cofactor biosynthesis; 7,8-dihydroneopterin triphosphate biosynthesis; 7,8-dihydroneopterin triphosphate from GTP: step 1/1. This chain is GTP cyclohydrolase 1, found in Helicobacter pylori (strain Shi470).